Consider the following 510-residue polypeptide: D-alanine--D-alanyl carrier protein ligase (510 aa).

Position 157-158 (157-158 (TS)) interacts with ATP. D202 contacts D-alanine. 297–302 (NTYGPT) is an ATP binding site. V306 serves as a coordination point for D-alanine. D389 and K498 together coordinate ATP. Position 498 (K498) interacts with D-alanine.

This sequence belongs to the ATP-dependent AMP-binding enzyme family. DltA subfamily.

The protein resides in the cytoplasm. It catalyses the reaction holo-[D-alanyl-carrier protein] + D-alanine + ATP = D-alanyl-[D-alanyl-carrier protein] + AMP + diphosphate. It functions in the pathway cell wall biogenesis; lipoteichoic acid biosynthesis. Catalyzes the first step in the D-alanylation of lipoteichoic acid (LTA), the activation of D-alanine and its transfer onto the D-alanyl carrier protein (Dcp) DltC. In an ATP-dependent two-step reaction, forms a high energy D-alanyl-AMP intermediate, followed by transfer of the D-alanyl residue as a thiol ester to the phosphopantheinyl prosthetic group of the Dcp. D-alanylation of LTA plays an important role in modulating the properties of the cell wall in Gram-positive bacteria, influencing the net charge of the cell wall. The polypeptide is D-alanine--D-alanyl carrier protein ligase (Listeria monocytogenes serotype 4a (strain HCC23)).